A 1501-amino-acid polypeptide reads, in one-letter code: Neither inactivation nor afterpotential protein C (1501 aa).

The Protein kinase domain maps to 16 to 282 (FEIYEEIAQG…MVEMVEHPFL (267 aa)). ATP-binding positions include 22 to 30 (IAQGVNAKV) and Lys45. The Proton acceptor role is filled by Asp145. Ser183 is modified (phosphoserine). Residues 332 to 1037 (MYPEDLAALE…FLARLYELQV (706 aa)) form the Myosin motor domain. Residues 913–934 (LTLLKMLSQNANLGVHFVRCIR) form an actin-binding region. IQ domains follow at residues 1036–1065 (QVKKVIKVQSMMRALLARKRVKGGKVFKLG) and 1072–1101 (HDVAASKIQKAFRGFRDRVRLPPLVNEKSG). Positions 1043 to 1271 (VQSMMRALLA…RMGESDNIYN (229 aa)) are interaction with rtp. The non alpha-helical, C-terminal domain stretch occupies residues 1066-1501 (KKGPEHHDVA…ITLSGYAVDI (436 aa)). 2 disordered regions span residues 1308–1364 (NWGV…DPVR) and 1390–1473 (KTNY…EDSN). A compositionally biased stretch (pro residues) spans 1326–1335 (APPPPPPPMP). Residues 1336–1358 (SSNYYRNNPNQQQRNYQQRSSYP) show a composition bias toward low complexity. The span at 1405 to 1414 (NNRRGSDSGD) shows a compositional bias: basic and acidic residues. The segment covering 1449–1463 (FGQQQRAPTLRQSPA) has biased composition (polar residues).

This sequence in the C-terminal section; belongs to the TRAFAC class myosin-kinesin ATPase superfamily. Myosin family. In the N-terminal section; belongs to the protein kinase superfamily. Ser/Thr protein kinase family. In terms of assembly, interacts with rtp. In terms of tissue distribution, expressed in the phototransducing compartment of photoreceptor cells, the rhabdomeres (at protein level).

The protein localises to the cytoplasm. It localises to the cytoskeleton. Its subcellular location is the nucleus. It is found in the membrane. The protein resides in the cell projection. The protein localises to the rhabdomere membrane. It carries out the reaction L-seryl-[protein] + ATP = O-phospho-L-seryl-[protein] + ADP + H(+). It catalyses the reaction L-threonyl-[protein] + ATP = O-phospho-L-threonyl-[protein] + ADP + H(+). Required for photoreceptor cell function. The ninaC proteins combines putative serine/threonine-protein kinase and myosin activities. Essential for the expression and stability of the rtp protein in the photoreceptors. The rtp/ninaC complex is required for stability of inad and inac and the normal termination of phototransduction in the retina. The sequence is that of Neither inactivation nor afterpotential protein C (ninaC) from Drosophila melanogaster (Fruit fly).